The primary structure comprises 386 residues: Glucose-1-phosphate adenylyltransferase (386 aa).

Residues Y99, G164, 179–180, and S190 contribute to the alpha-D-glucose 1-phosphate site; that span reads EK.

Belongs to the bacterial/plant glucose-1-phosphate adenylyltransferase family. As to quaternary structure, homotetramer.

The catalysed reaction is alpha-D-glucose 1-phosphate + ATP + H(+) = ADP-alpha-D-glucose + diphosphate. Its pathway is glycan biosynthesis; glycogen biosynthesis. Functionally, involved in the biosynthesis of ADP-glucose, a building block required for the elongation reactions to produce glycogen. Catalyzes the reaction between ATP and alpha-D-glucose 1-phosphate (G1P) to produce pyrophosphate and ADP-Glc. This chain is Glucose-1-phosphate adenylyltransferase, found in Clostridioides difficile (strain 630) (Peptoclostridium difficile).